The sequence spans 351 residues: Flap endonuclease 1 (351 aa).

The segment at 1–98 (MDLAELVEEI…QELERRKKVK (98 aa)) is N-domain. Mg(2+) is bound by residues D27, D80, E154, E156, D175, D177, and D238. Positions 118-260 (ELKKYAQMSI…TAYRIIKKYG (143 aa)) are I-domain. Residues 343-351 (RQTGLDQWF) are interaction with PCNA.

Belongs to the XPG/RAD2 endonuclease family. FEN1 subfamily. In terms of assembly, interacts with PCNA. PCNA stimulates the nuclease activity without altering cleavage specificity. The cofactor is Mg(2+).

Structure-specific nuclease with 5'-flap endonuclease and 5'-3' exonuclease activities involved in DNA replication and repair. During DNA replication, cleaves the 5'-overhanging flap structure that is generated by displacement synthesis when DNA polymerase encounters the 5'-end of a downstream Okazaki fragment. Binds the unpaired 3'-DNA end and kinks the DNA to facilitate 5' cleavage specificity. Cleaves one nucleotide into the double-stranded DNA from the junction in flap DNA, leaving a nick for ligation. Also involved in the base excision repair (BER) pathway. Acts as a genome stabilization factor that prevents flaps from equilibrating into structures that lead to duplications and deletions. Also possesses 5'-3' exonuclease activity on nicked or gapped double-stranded DNA. This Sulfurisphaera tokodaii (strain DSM 16993 / JCM 10545 / NBRC 100140 / 7) (Sulfolobus tokodaii) protein is Flap endonuclease 1.